The primary structure comprises 392 residues: Outer membrane protein assembly factor BamB (392 aa).

Positions 1 to 19 are cleaved as a signal peptide; that stretch reads MQLRKLLLPGLLSVTLLSG. A lipid anchor (N-palmitoyl cysteine) is attached at C20. Residue C20 is the site of S-diacylglycerol cysteine attachment.

The protein belongs to the BamB family. In terms of assembly, part of the Bam complex, which is composed of the outer membrane protein BamA, and four lipoproteins BamB, BamC, BamD and BamE.

The protein localises to the cell outer membrane. Functionally, part of the outer membrane protein assembly complex, which is involved in assembly and insertion of beta-barrel proteins into the outer membrane. This chain is Outer membrane protein assembly factor BamB, found in Shigella dysenteriae serotype 1 (strain Sd197).